The chain runs to 352 residues: C-C chemokine receptor type 5 (352 aa).

The Extracellular portion of the chain corresponds to 1–30 (MDYQVSSPTYDIDYYTSEPCQKINVKQIAA). The residue at position 3 (Tyr-3) is a Sulfotyrosine. Ser-6 and Ser-7 each carry an O-linked (GalNAc...) serine glycan. Sulfotyrosine occurs at positions 10, 14, and 15. 2 disulfides stabilise this stretch: Cys-20/Cys-269 and Cys-101/Cys-178. Residues 31-58 (RLLPPLYSLVFIFGFVGNILVVLILINC) traverse the membrane as a helical segment. Residues 59–68 (KRLKSMTDIY) lie on the Cytoplasmic side of the membrane. Residues 69–89 (LLNLAISDLLFLLTVPFWAHY) form a helical membrane-spanning segment. At 90–102 (AAAQWDFGNTMCQ) the chain is on the extracellular side. The helical transmembrane segment at 103-124 (LLTGLYFIGFFSGIFFIILLTI) threads the bilayer. The Cytoplasmic portion of the chain corresponds to 125–141 (DRYLAIVHAVFALKART). Residues 142–166 (VTFGVVTSVITWVVAVFASLPGIIF) form a helical membrane-spanning segment. Over 167-198 (TRSQREGLHYTCSSHFPYSQYQFWKNFQTLKI) the chain is Extracellular. The chain crosses the membrane as a helical span at residues 199-218 (VILGLVLPLLVMVICYSGIL). The Cytoplasmic segment spans residues 219 to 235 (KTLLRCRNEKKRHRAVR). The helical transmembrane segment at 236–260 (LIFTIMIVYFLFWAPYNIVLLLNTF) threads the bilayer. The Extracellular segment spans residues 261–277 (QEFFGLNNCSSSNRLDQ). Residues 278-301 (AMQVTETLGMTHCCINPIIYAFVG) traverse the membrane as a helical segment. The Cytoplasmic portion of the chain corresponds to 302–352 (EKFRNYLLVFFQKHIAKRFCKCCSIFQQEAPERASSVYTRSTGEQEISVGL). S-palmitoyl cysteine attachment occurs at residues Cys-321, Cys-323, and Cys-324. A phosphoserine; by BARK1 mark is found at Ser-336, Ser-337, Ser-342, and Ser-349.

This sequence belongs to the G-protein coupled receptor 1 family. In terms of assembly, interacts with PRAF2. Efficient ligand binding to CCL3/MIP-1alpha and CCL4/MIP-1beta requires sulfation, O-glycosylation and sialic acid modifications. Glycosylation on Ser-6 is required for efficient binding of CCL4. Interacts with GRK2. Interacts with ARRB1 and ARRB2. Interacts with CNIH4. Interacts with S100A4; this interaction stimulates T-lymphocyte chemotaxis. In terms of processing, sulfated on at least 2 of the N-terminal tyrosines. Sulfation is required for efficient binding of the chemokines, CCL3 and CCL4. Palmitoylation in the C-terminal is important for cell surface expression. Post-translationally, phosphorylation on serine residues in the C-terminal is stimulated by binding CC chemokines especially by APO-RANTES. In terms of processing, O-glycosylated, but not N-glycosylated. Ser-6 appears to be the major site even if Ser-7 may be also O-glycosylated. Also sialylated glycans present which contribute to chemokine binding. Thr-16 and Ser-17 may also be glycosylated and, if so, with small moieties such as a T-antigen.

It is found in the cell membrane. In terms of biological role, receptor for a number of inflammatory CC-chemokines including CCL3/MIP-1-alpha, CCL4/MIP-1-beta and RANTES and subsequently transduces a signal by increasing the intracellular calcium ion level. May play a role in the control of granulocytic lineage proliferation or differentiation. Participates in T-lymphocyte migration to the infection site by acting as a chemotactic receptor. The polypeptide is C-C chemokine receptor type 5 (CCR5) (Papio anubis (Olive baboon)).